The primary structure comprises 169 residues: U3 small nucleolar ribonucleoprotein protein imp3 (169 aa).

In terms of domain architecture, S4 RNA-binding spans 109-166 (RRLPVVMCRLKMCETVSTSVKYVEHGHVRVGPEVITDPAFFVTRNMEDFVTWVDSSKI).

It belongs to the universal ribosomal protein uS4 family. Component of a heterotrimeric complex containing imp3, imp4 and mpp10.

It is found in the nucleus. Its subcellular location is the nucleolus. In terms of biological role, component of the U3 small nucleolar ribonucleoprotein. Required for the early cleavages at sites A0, A1 and A2 during 18S ribosomal pre-RNA processing. In Pneumocystis carinii, this protein is U3 small nucleolar ribonucleoprotein protein imp3 (RBP).